Here is a 201-residue protein sequence, read N- to C-terminus: Protein GrpE (201 aa).

The protein belongs to the GrpE family. Homodimer.

It localises to the cytoplasm. Functionally, participates actively in the response to hyperosmotic and heat shock by preventing the aggregation of stress-denatured proteins, in association with DnaK and GrpE. It is the nucleotide exchange factor for DnaK and may function as a thermosensor. Unfolded proteins bind initially to DnaJ; upon interaction with the DnaJ-bound protein, DnaK hydrolyzes its bound ATP, resulting in the formation of a stable complex. GrpE releases ADP from DnaK; ATP binding to DnaK triggers the release of the substrate protein, thus completing the reaction cycle. Several rounds of ATP-dependent interactions between DnaJ, DnaK and GrpE are required for fully efficient folding. This Shewanella denitrificans (strain OS217 / ATCC BAA-1090 / DSM 15013) protein is Protein GrpE.